Reading from the N-terminus, the 376-residue chain is Erythronate-4-phosphate dehydrogenase (376 aa).

Residues S45 and T67 each coordinate substrate. D147 provides a ligand contact to NAD(+). The active site involves R209. D233 is an NAD(+) binding site. E238 is an active-site residue. Catalysis depends on H255, which acts as the Proton donor. Residue G258 participates in NAD(+) binding. Position 259 (Y259) interacts with substrate.

Belongs to the D-isomer specific 2-hydroxyacid dehydrogenase family. PdxB subfamily. Homodimer.

The protein resides in the cytoplasm. It catalyses the reaction 4-phospho-D-erythronate + NAD(+) = (R)-3-hydroxy-2-oxo-4-phosphooxybutanoate + NADH + H(+). Its pathway is cofactor biosynthesis; pyridoxine 5'-phosphate biosynthesis; pyridoxine 5'-phosphate from D-erythrose 4-phosphate: step 2/5. Catalyzes the oxidation of erythronate-4-phosphate to 3-hydroxy-2-oxo-4-phosphonooxybutanoate. The chain is Erythronate-4-phosphate dehydrogenase from Shewanella sp. (strain ANA-3).